The following is a 497-amino-acid chain: Tripartite motif-containing protein 5 (497 aa).

Alanine 2 carries the post-translational modification N-acetylalanine. Residues 15 to 60 form an RING-type zinc finger; sequence CPICLELLTEPLSLPCGHSFCQACITANHRKSMLYKEGERSCPVCR. A Phosphoserine modification is found at serine 87. The B box-type zinc finger occupies 92 to 133; it reads LKVDHCARHGEKLLLFCQEDSKVICWLCERSQEHRGHHTFLM. Positions 97, 100, 119, and 125 each coordinate Zn(2+). The stretch at 137-225 forms a coiled coil; the sequence is AQEYHVKLQT…LTKSETEMVQ (89 aa). The interval 187–200 is required for interaction with GABARAP and for autophagy; the sequence is FEQLREILDWEESN. The region spanning 283–497 is the B30.2/SPRY domain; sequence LKGMLDMFRE…VPMTLCSPSS (215 aa).

The protein belongs to the TRIM/RBCC family. Can form homodimers and homotrimers. In addition to lower-order dimerization, also exhibits a higher-order multimerization and both low- and high-order multimerizations are essential for its restriction activity. Interacts with BTBD1 and BTBD2. Interacts with PSMC4, PSMC5, PSMD7 and HSPA8/HSC70. Interacts (via B30.2/SPRY domain) with HSPA1A/B. Interacts with PSMC2, MAP3K7/TAK1, TAB2 and TAB3. Interacts with SQSTM1. Interacts with TRIM6 and TRIM34. Interacts with ULK1 (phosphorylated form), GABARAP, GABARAPL1, GABARAPL2, MAP1LC3A, MAP1LC3C and BECN1. Post-translationally, degraded in a proteasome-independent fashion in the absence of viral infection but in a proteasome-dependent fashion following exposure to restriction sensitive virus. In terms of processing, autoubiquitinated in a RING finger- and UBE2D2-dependent manner. Monoubiquitinated by TRIM21. Deubiquitinated by Yersinia YopJ. Ubiquitination may not lead to proteasomal degradation.

Its subcellular location is the cytoplasm. It is found in the nucleus. It catalyses the reaction S-ubiquitinyl-[E2 ubiquitin-conjugating enzyme]-L-cysteine + [acceptor protein]-L-lysine = [E2 ubiquitin-conjugating enzyme]-L-cysteine + N(6)-ubiquitinyl-[acceptor protein]-L-lysine.. It participates in protein modification; protein ubiquitination. Capsid-specific restriction factor that prevents infection from non-host-adapted retroviruses. Blocks viral replication early in the life cycle, after viral entry but before reverse transcription. In addition to acting as a capsid-specific restriction factor, also acts as a pattern recognition receptor that activates innate immune signaling in response to the retroviral capsid lattice. Binding to the viral capsid triggers its E3 ubiquitin ligase activity, and in concert with the heterodimeric ubiquitin conjugating enzyme complex UBE2V1-UBE2N (also known as UBC13-UEV1A complex) generates 'Lys-63'-linked polyubiquitin chains, which in turn are catalysts in the autophosphorylation of the MAP3K7/TAK1 complex (includes TAK1, TAB2, and TAB3). Activation of the MAP3K7/TAK1 complex by autophosphorylation results in the induction and expression of NF-kappa-B and MAPK-responsive inflammatory genes, thereby leading to an innate immune response in the infected cell. Plays a role in regulating autophagy through activation of autophagy regulator BECN1 by causing its dissociation from its inhibitors BCL2 and TAB2. The protein is Tripartite motif-containing protein 5 (TRIM5) of Papio anubis (Olive baboon).